Here is a 147-residue protein sequence, read N- to C-terminus: Myoglobin (147 aa).

A Globin domain is found at 2 to 137 (ADFEMVLKHW…VMTTIIADIE (136 aa)). His-60 is a binding site for nitrite. His-60 is a binding site for O2. His-89 contributes to the heme b binding site.

Belongs to the globin family. In terms of assembly, monomeric.

Its subcellular location is the cytoplasm. It localises to the sarcoplasm. It carries out the reaction Fe(III)-heme b-[protein] + nitric oxide + H2O = Fe(II)-heme b-[protein] + nitrite + 2 H(+). The enzyme catalyses H2O2 + AH2 = A + 2 H2O. Functionally, monomeric heme protein which primary function is to store oxygen and facilitate its diffusion within muscle tissues. Reversibly binds oxygen through a pentacoordinated heme iron and enables its timely and efficient release as needed during periods of heightened demand. Depending on the oxidative conditions of tissues and cells, and in addition to its ability to bind oxygen, it also has a nitrite reductase activity whereby it regulates the production of bioactive nitric oxide. Under stress conditions, like hypoxia and anoxia, it also protects cells against reactive oxygen species thanks to its pseudoperoxidase activity. This chain is Myoglobin (mb), found in Makaira nigricans (Atlantic blue marlin).